We begin with the raw amino-acid sequence, 488 residues long: GTPase Der (488 aa).

2 EngA-type G domains span residues 3-166 (PVVA…AEAM) and 199-372 (IKLA…DSAT). GTP contacts are provided by residues 9–16 (GRPNVGKS), 56–60 (DTGGI), 118–121 (NKVD), 205–212 (GKPNVGKS), 252–256 (DTAGV), and 317–320 (NKWD). The KH-like domain maps to 373–457 (RRVSTSMLTR…PIQLRFQEGD (85 aa)). The segment at 460–488 (FENKTEKLTMSQERRRKRAQSHIKDRKTK) is disordered. A compositionally biased stretch (basic residues) spans 473–488 (RRRKRAQSHIKDRKTK).

This sequence belongs to the TRAFAC class TrmE-Era-EngA-EngB-Septin-like GTPase superfamily. EngA (Der) GTPase family. Associates with the 50S ribosomal subunit.

Its function is as follows. GTPase that plays an essential role in the late steps of ribosome biogenesis. In Shewanella baltica (strain OS223), this protein is GTPase Der.